The chain runs to 533 residues: Ribonuclease III domain-containing protein RNC1, chloroplastic (533 aa).

A chloroplast-targeting transit peptide spans 1 to 30; sequence MAPPAMAFQALALGPLPLPLPAARRRRRVR. 2 disordered regions span residues 31–57 and 66–85; these read VLAVAADHTPPPPPSPSSPPEPANSPS and RKKAVSPKKKHPPRRFILKP. The span at 39 to 53 shows a compositional bias: pro residues; sequence TPPPPPSPSSPPEPA. Residues 69 to 82 are compositionally biased toward basic residues; sequence AVSPKKKHPPRRFI. 2 RNase III domains span residues 164 to 279 and 411 to 511; these read LLYL…LCFG and EHPR…CVYG.

In terms of assembly, interacts with RNA. Part of large ribonucleo-protein particles that contain CAF1 and/or CAF2.

It localises to the plastid. The protein localises to the chloroplast. Binds specific group II introns in chloroplasts and facilitates their splicing. Acts on both subgroup IIA and subgroup IIB introns. The substrates of the subgroup II also require the CRM domain proteins CAF1 or CAF2. Binds both single-stranded and double-stranded RNA non-specifically, but lacks endonuclease activity. Required for plastid ribosome biogenesis. This Oryza sativa subsp. japonica (Rice) protein is Ribonuclease III domain-containing protein RNC1, chloroplastic.